The primary structure comprises 351 residues: Nicotinate-nucleotide--dimethylbenzimidazole phosphoribosyltransferase (351 aa).

Glu-317 functions as the Proton acceptor in the catalytic mechanism.

It belongs to the CobT family.

The catalysed reaction is 5,6-dimethylbenzimidazole + nicotinate beta-D-ribonucleotide = alpha-ribazole 5'-phosphate + nicotinate + H(+). It participates in nucleoside biosynthesis; alpha-ribazole biosynthesis; alpha-ribazole from 5,6-dimethylbenzimidazole: step 1/2. In terms of biological role, catalyzes the synthesis of alpha-ribazole-5'-phosphate from nicotinate mononucleotide (NAMN) and 5,6-dimethylbenzimidazole (DMB). The chain is Nicotinate-nucleotide--dimethylbenzimidazole phosphoribosyltransferase from Pseudomonas aeruginosa (strain ATCC 15692 / DSM 22644 / CIP 104116 / JCM 14847 / LMG 12228 / 1C / PRS 101 / PAO1).